The primary structure comprises 448 residues: Acetate kinase (448 aa).

Asn7 provides a ligand contact to Mg(2+). Position 14 (Lys14) interacts with ATP. Arg91 contacts substrate. Asp148 (proton donor/acceptor) is an active-site residue. ATP contacts are provided by residues 208–212 (HIGNG) and 283–285 (DRR). Glu388 is a Mg(2+) binding site.

The protein belongs to the acetokinase family. In terms of assembly, homodimer. It depends on Mg(2+) as a cofactor. The cofactor is Mn(2+).

The protein localises to the cytoplasm. It catalyses the reaction acetate + ATP = acetyl phosphate + ADP. Its pathway is metabolic intermediate biosynthesis; acetyl-CoA biosynthesis; acetyl-CoA from acetate: step 1/2. In terms of biological role, catalyzes the formation of acetyl phosphate from acetate and ATP. Can also catalyze the reverse reaction. This chain is Acetate kinase, found in Treponema pallidum (strain Nichols).